The primary structure comprises 153 residues: Putative phosphatidylglycerol/phosphatidylinositol transfer protein DDB_G0285639 (153 aa).

An N-terminal signal peptide occupies residues 1–21 (MIIKILLLIISISLFLNISIG). N-linked (GlcNAc...) asparagine glycans are attached at residues asparagine 17, asparagine 61, asparagine 87, asparagine 117, and asparagine 140.

Belongs to the NPC2 family. Monomer.

Its function is as follows. Catalyzes the intermembrane transfer of phosphatidylglycerol and phosphatidylinositol. In Dictyostelium discoideum (Social amoeba), this protein is Putative phosphatidylglycerol/phosphatidylinositol transfer protein DDB_G0285639.